The sequence spans 417 residues: NADH-quinone oxidoreductase subunit D (417 aa).

It belongs to the complex I 49 kDa subunit family. As to quaternary structure, NDH-1 is composed of 14 different subunits. Subunits NuoB, C, D, E, F, and G constitute the peripheral sector of the complex.

Its subcellular location is the cell inner membrane. It catalyses the reaction a quinone + NADH + 5 H(+)(in) = a quinol + NAD(+) + 4 H(+)(out). NDH-1 shuttles electrons from NADH, via FMN and iron-sulfur (Fe-S) centers, to quinones in the respiratory chain. The immediate electron acceptor for the enzyme in this species is believed to be ubiquinone. Couples the redox reaction to proton translocation (for every two electrons transferred, four hydrogen ions are translocated across the cytoplasmic membrane), and thus conserves the redox energy in a proton gradient. The chain is NADH-quinone oxidoreductase subunit D from Francisella tularensis subsp. holarctica (strain FTNF002-00 / FTA).